The sequence spans 347 residues: MKPPILIIIMSTVISGTMIVLTSSHWMLTWIGFEMNMLAVIPILMKKFNPRAMEASTKYFLMQATASMLLMMGITINLLHTGQWTILNNLNPTASTLMTIALAMKLGLAPFHFWVPEVTQGISLSSGMILLTWQKIAPLSVLYQISPNINPKLLLLMAILSVLIGGWGGLNQTQLRKILAYSSIAHMGWMSTILIYNPTMMLLNLIIYIMMTLSTFMLFMHNSTTTTLALSQTWNKMPLITSLILMLMLSLGGLPPLSGFIPKWMIIQELTKNEMIIMPTFLAITALLNLYFYMRLTYATALTMFPSTNNMKMKWQFENTKKTMFLPPLIVMSTMLIPLTPIISILE.

The next 11 membrane-spanning stretches (helical) occupy residues 3–23 (PPIL…VLTS), 25–45 (HWML…PILM), 59–79 (YFLM…INLL), 96–116 (TLMT…FWVP), 122–142 (ISLS…LSVL), 153–173 (LLLL…LNQT), 178–198 (ILAY…IYNP), 200–220 (MMLL…MLFM), 237–257 (MPLI…LPPL), 274–294 (EMII…YFYM), and 325–345 (FLPP…IISI).

This sequence belongs to the complex I subunit 2 family. In terms of assembly, core subunit of respiratory chain NADH dehydrogenase (Complex I) which is composed of 45 different subunits. Interacts with TMEM242.

The protein localises to the mitochondrion inner membrane. It carries out the reaction a ubiquinone + NADH + 5 H(+)(in) = a ubiquinol + NAD(+) + 4 H(+)(out). Functionally, core subunit of the mitochondrial membrane respiratory chain NADH dehydrogenase (Complex I) which catalyzes electron transfer from NADH through the respiratory chain, using ubiquinone as an electron acceptor. Essential for the catalytic activity and assembly of complex I. The chain is NADH-ubiquinone oxidoreductase chain 2 from Paradoxurus hermaphroditus (Asian palm civet).